A 76-amino-acid polypeptide reads, in one-letter code: Spore germination protein-like protein YdzR (76 aa).

It belongs to the GerPA/GerPF family.

The protein is Spore germination protein-like protein YdzR (ydzR) of Bacillus subtilis (strain 168).